The following is a 162-amino-acid chain: 2-C-methyl-D-erythritol 2,4-cyclodiphosphate synthase (162 aa).

A divalent metal cation is bound by residues D12 and H14. Residues 12 to 14 (DVH) and 38 to 39 (HS) contribute to the 4-CDP-2-C-methyl-D-erythritol 2-phosphate site. An a divalent metal cation-binding site is contributed by H46. 4-CDP-2-C-methyl-D-erythritol 2-phosphate contacts are provided by residues 60–62 (DIG), 65–69 (FPDTD), and R146.

This sequence belongs to the IspF family. In terms of assembly, homotrimer. It depends on a divalent metal cation as a cofactor.

It carries out the reaction 4-CDP-2-C-methyl-D-erythritol 2-phosphate = 2-C-methyl-D-erythritol 2,4-cyclic diphosphate + CMP. The protein operates within isoprenoid biosynthesis; isopentenyl diphosphate biosynthesis via DXP pathway; isopentenyl diphosphate from 1-deoxy-D-xylulose 5-phosphate: step 4/6. Its function is as follows. Involved in the biosynthesis of isopentenyl diphosphate (IPP) and dimethylallyl diphosphate (DMAPP), two major building blocks of isoprenoid compounds. Catalyzes the conversion of 4-diphosphocytidyl-2-C-methyl-D-erythritol 2-phosphate (CDP-ME2P) to 2-C-methyl-D-erythritol 2,4-cyclodiphosphate (ME-CPP) with a corresponding release of cytidine 5-monophosphate (CMP). This Bordetella parapertussis (strain 12822 / ATCC BAA-587 / NCTC 13253) protein is 2-C-methyl-D-erythritol 2,4-cyclodiphosphate synthase.